The sequence spans 274 residues: Putative pyruvate, phosphate dikinase regulatory protein (274 aa).

An ADP-binding site is contributed by 153-160 (GISRTSKT).

It belongs to the pyruvate, phosphate/water dikinase regulatory protein family. PDRP subfamily.

It carries out the reaction N(tele)-phospho-L-histidyl/L-threonyl-[pyruvate, phosphate dikinase] + ADP = N(tele)-phospho-L-histidyl/O-phospho-L-threonyl-[pyruvate, phosphate dikinase] + AMP + H(+). The enzyme catalyses N(tele)-phospho-L-histidyl/O-phospho-L-threonyl-[pyruvate, phosphate dikinase] + phosphate + H(+) = N(tele)-phospho-L-histidyl/L-threonyl-[pyruvate, phosphate dikinase] + diphosphate. In terms of biological role, bifunctional serine/threonine kinase and phosphorylase involved in the regulation of the pyruvate, phosphate dikinase (PPDK) by catalyzing its phosphorylation/dephosphorylation. In Bartonella henselae (strain ATCC 49882 / DSM 28221 / CCUG 30454 / Houston 1) (Rochalimaea henselae), this protein is Putative pyruvate, phosphate dikinase regulatory protein.